Here is a 349-residue protein sequence, read N- to C-terminus: FK506-binding protein-like (349 aa).

Thr-3 is modified (phosphothreonine). Residues 36–55 are disordered; it reads RQQPRDPPTETLELEVSPDP. TPR repeat units lie at residues 210–243, 252–285, and 286–319; these read AREE…LLTL, TVLH…EPGH, and LKAL…DPKN.

Forms a ternary complex with CDKN1A/p21 and HSP90AB1/Hsp90. As to expression, ubiquitously expressed with higher levels in testis.

May be involved in response to X-ray. Regulates p21 protein stability by binding to Hsp90 and p21. This Homo sapiens (Human) protein is FK506-binding protein-like (FKBPL).